The sequence spans 524 residues: MEHLDLHHIFELGFFVVMIAAGITAIAKKCRQPYPIALVIVGTIIGLVHIPLFEPLKEFITEGEVFNFVIITLFLPALLGEAALKLPFSHLRENKRPVLALFGGTLISFLIVGFSSMWLMHLAIPAAFVFAALMSATDPVSVLSIFKSVGAPKKLSIVVEGESLFNDGLAVVLFNISAFYLMTYLDLGIQGAGLGLWEFVKVISLGLIIGGVLGYVFSQLTKYFDDYPLEIIFSIILFYSSFLLAEMAGASGVIAVVVAALIFGNYGAKIGMSPTTKLNINNFWDVAALLANSLVFLMVGLEITRIDLTDKWGLAIMAIVIVLIARSAAVYISLAFIKKFPVTWKHTINWGGLKGSLSIALVLSLPRDFPGREDILVFAFSVVLFSLVVQGLTIKPLLERLGVNQKEEGNQEYEELLAKGHRLETAIKEVQQVKHNLLIHEAVSSELTDQYKKEVSQLHQQTNKLFETYPELKNKQQTILKKHSLYAQYQAIENLSREDIISNEVAELEQARIIDEIVRLQNDH.

11 consecutive transmembrane segments (helical) span residues 6–26, 33–53, 59–79, 98–118, 126–146, 169–189, 193–213, 242–262, 283–303, 312–332, and 374–394; these read LHHI…ITAI, PYPI…IPLF, FITE…PALL, VLAL…SSMW, AAFV…LSIF, LAVV…DLGI, GLGL…GGVL, FLLA…AALI, FWDV…GLEI, WGLA…AVYI, and DILV…GLTI.

It belongs to the monovalent cation:proton antiporter 1 (CPA1) transporter (TC 2.A.36) family.

The protein resides in the cell membrane. Functionally, na(+)/H(+) antiporter that extrudes sodium in exchange for external protons. Can also transport lithium. This Bacillus atrophaeus protein is Na(+)/H(+) antiporter NhaG (nhaG).